A 162-amino-acid polypeptide reads, in one-letter code: Putative auxin-responsive protein IAA28 (162 aa).

A PB1 domain is found at 23 to 118; that stretch reads SRFVKVFMHG…TVKRIYIVPA (96 aa). Residues 122–141 are disordered; it reads NESEYQEEEEDNAAAAATAD.

Belongs to the Aux/IAA family. Homodimers and heterodimers.

Its subcellular location is the nucleus. Aux/IAA proteins are short-lived transcriptional factors that function as repressors of early auxin response genes at low auxin concentrations. The protein is Putative auxin-responsive protein IAA28 (IAA28) of Oryza sativa subsp. japonica (Rice).